The primary structure comprises 111 residues: uncharacterized protein (111 aa).

This sequence belongs to the asfivirus E111R family.

This is an uncharacterized protein from Ornithodoros (relapsing fever ticks).